A 261-amino-acid polypeptide reads, in one-letter code: Triosephosphate isomerase (261 aa).

Substrate is bound at residue 10 to 12 (NWK). His-100 acts as the Electrophile in catalysis. The active-site Proton acceptor is the Glu-172. Substrate contacts are provided by residues Gly-178, Ser-218, and 239-240 (GG).

Belongs to the triosephosphate isomerase family. In terms of assembly, homodimer.

The protein localises to the cytoplasm. It carries out the reaction D-glyceraldehyde 3-phosphate = dihydroxyacetone phosphate. The protein operates within carbohydrate biosynthesis; gluconeogenesis. Its pathway is carbohydrate degradation; glycolysis; D-glyceraldehyde 3-phosphate from glycerone phosphate: step 1/1. In terms of biological role, involved in the gluconeogenesis. Catalyzes stereospecifically the conversion of dihydroxyacetone phosphate (DHAP) to D-glyceraldehyde-3-phosphate (G3P). The chain is Triosephosphate isomerase from Mycobacterium marinum (strain ATCC BAA-535 / M).